The following is a 541-amino-acid chain: Man(5)GlcNAc(2)-PP-dolichol translocation protein RFT1 (541 aa).

The next 11 helical transmembrane spans lie at 16–36 (SGLL…AFIL), 45–62 (GIVN…TFLA), 85–105 (LLWL…WVWL), 123–143 (VLFF…WVLA), 154–176 (LAES…WLPH), 187–207 (LLYT…LLRS), 335–355 (LALL…QLAL), 376–396 (CLYV…FAAM), 414–434 (SFLV…FIMA), 470–490 (VLLG…AFLC), and 499–519 (LAHI…AFLT).

This sequence belongs to the RFT1 family.

Its subcellular location is the endoplasmic reticulum membrane. It participates in protein modification; protein glycosylation. In terms of biological role, intramembrane glycolipid transporter that operates in the biosynthetic pathway of dolichol-linked oligosaccharides, the glycan precursors employed in protein asparagine (N)-glycosylation. The sequential addition of sugars to dolichol pyrophosphate produces dolichol-linked oligosaccharides containing fourteen sugars, including two GlcNAcs, nine mannoses and three glucoses. Once assembled, the oligosaccharide is transferred from the lipid to nascent proteins by oligosaccharyltransferases. The assembly of dolichol-linked oligosaccharides begins on the cytosolic side of the endoplasmic reticulum membrane and finishes in its lumen. RFT1 could mediate the translocation of the cytosolically oriented intermediate DolPP-GlcNAc2Man5, produced by ALG11, into the ER lumen where dolichol-linked oligosaccharides assembly continues. However, the intramembrane lipid transporter activity could not be confirmed in vitro. The sequence is that of Man(5)GlcNAc(2)-PP-dolichol translocation protein RFT1 from Mus musculus (Mouse).